Consider the following 96-residue polypeptide: Phosphoribosyl-ATP pyrophosphatase (96 aa).

This sequence belongs to the PRA-PH family.

The protein localises to the cytoplasm. It catalyses the reaction 1-(5-phospho-beta-D-ribosyl)-ATP + H2O = 1-(5-phospho-beta-D-ribosyl)-5'-AMP + diphosphate + H(+). The protein operates within amino-acid biosynthesis; L-histidine biosynthesis; L-histidine from 5-phospho-alpha-D-ribose 1-diphosphate: step 2/9. The sequence is that of Phosphoribosyl-ATP pyrophosphatase from Methanococcus maripaludis (strain C5 / ATCC BAA-1333).